Here is a 977-residue protein sequence, read N- to C-terminus: DNA-directed RNA polymerase 3B, chloroplastic (977 aa).

The N-terminal 71 residues, 1 to 71 (MASTASYSPS…NNIQSQTTVC (71 aa)), are a transit peptide targeting the chloroplast. Residues Asp678, Lys753, and Asp910 contribute to the active site.

Belongs to the phage and mitochondrial RNA polymerase family.

Its subcellular location is the plastid. It localises to the chloroplast. It carries out the reaction RNA(n) + a ribonucleoside 5'-triphosphate = RNA(n+1) + diphosphate. DNA-dependent RNA polymerase catalyzes the transcription of DNA into RNA using the four ribonucleoside triphosphates as substrates. This Nicotiana tabacum (Common tobacco) protein is DNA-directed RNA polymerase 3B, chloroplastic (RPOT3-TOM).